A 318-amino-acid chain; its full sequence is Very-long-chain 3-oxoacyl-CoA reductase-A (318 aa).

The chain crosses the membrane as a helical span at residues 15 to 35; that stretch reads FWYLGVLAAAWWGLRAACCLL. 54–83 serves as a coordination point for NADP(+); the sequence is GKWAVVTGATDGIGKAYAEELARRGMSIVL. 2 helical membrane-spanning segments follow: residues 187-207 and 281-301; these read GVIL…LTVY and AIMG…SMGM. A substrate-binding site is contributed by S194. Y207 acts as the Proton acceptor in catalysis.

The protein belongs to the short-chain dehydrogenases/reductases (SDR) family. 17-beta-HSD 3 subfamily.

The protein localises to the endoplasmic reticulum membrane. It catalyses the reaction a very-long-chain (3R)-3-hydroxyacyl-CoA + NADP(+) = a very-long-chain 3-oxoacyl-CoA + NADPH + H(+). The enzyme catalyses 17beta-estradiol + NAD(+) = estrone + NADH + H(+). The catalysed reaction is 17beta-estradiol + NADP(+) = estrone + NADPH + H(+). It participates in lipid metabolism; fatty acid biosynthesis. The protein operates within steroid biosynthesis; estrogen biosynthesis. In terms of biological role, catalyzes the second of the four reactions of the long-chain fatty acids elongation cycle. This endoplasmic reticulum-bound enzymatic process, allows the addition of two carbons to the chain of long- and very long-chain fatty acids/VLCFAs per cycle. This enzyme has a 3-ketoacyl-CoA reductase activity, reducing 3-ketoacyl-CoA to 3-hydroxyacyl-CoA, within each cycle of fatty acid elongation. Thereby, it may participate in the production of VLCFAs of different chain lengths that are involved in multiple biological processes as precursors of membrane lipids and lipid mediators. May also catalyze the transformation of estrone (E1) into estradiol (E2) and play a role in estrogen formation. The protein is Very-long-chain 3-oxoacyl-CoA reductase-A (hsd17b12-a) of Xenopus laevis (African clawed frog).